We begin with the raw amino-acid sequence, 102 residues long: Large ribosomal subunit protein bL21 (102 aa).

The protein belongs to the bacterial ribosomal protein bL21 family. As to quaternary structure, part of the 50S ribosomal subunit. Contacts protein L20.

Functionally, this protein binds to 23S rRNA in the presence of protein L20. The sequence is that of Large ribosomal subunit protein bL21 from Bifidobacterium longum (strain DJO10A).